We begin with the raw amino-acid sequence, 68 residues long: Large ribosomal subunit protein uL29 (68 aa).

Belongs to the universal ribosomal protein uL29 family.

This Chlorobaculum parvum (strain DSM 263 / NCIMB 8327) (Chlorobium vibrioforme subsp. thiosulfatophilum) protein is Large ribosomal subunit protein uL29.